Reading from the N-terminus, the 494-residue chain is V-type proton ATPase subunit B (494 aa).

It belongs to the ATPase alpha/beta chains family. V-ATPase is a heteromultimeric enzyme composed of a peripheral catalytic V1 complex (main components: subunits A, B, C, D, E, and F) attached to an integral membrane V0 proton pore complex (main component: the proteolipid protein).

Functionally, non-catalytic subunit of the peripheral V1 complex of vacuolar ATPase. V-ATPase is responsible for acidifying a variety of intracellular compartments in eukaryotic cells. The sequence is that of V-type proton ATPase subunit B (VAPB) from Plasmodium falciparum.